Reading from the N-terminus, the 338-residue chain is MQLVDRVRGAVTGMSRRLVVGAVGAALVSGLVGAVGGTATAGAFSRPGLPVEYLQVPSPSMGRDIKVQFQSGGANSPALYLLDGLRAQDDFSGWDINTPAFEWYDQSGLSVVMPVGGQSSFYSDWYQPACGKAGCQTYKWETFLTSELPGWLQANRHVKPTGSAVVGLSMAASSALTLAIYHPQQFVYAGAMSGLLDPSQAMGPTLIGLAMGDAGGYKASDMWGPKEDPAWQRNDPLLNVGKLIANNTRVWVYCGNGKPSDLGGNNLPAKFLEGFVRTSNIKFQDAYNAGGGHNGVFDFPDSGTHSWEYWGAQLNAMKPDLQRALGATPNTGPAPQGA.

The first 42 residues, 1–42 (MQLVDRVRGAVTGMSRRLVVGAVGAALVSGLVGAVGGTATAG), serve as a signal peptide directing secretion. 85 to 86 (LR) contacts substrate. The tract at residues 101–111 (FEWYDQSGLSV) is fibronectin-binding. Cysteine 130 and cysteine 135 are joined by a disulfide. 2 residues coordinate substrate: serine 169 and aspartate 197. Residue serine 169 is the Nucleophile of the active site. The active site involves glutamate 273. Residues 275 to 278 (FVRT), lysine 282, and 305 to 307 (HSW) each bind substrate. The active site involves histidine 305.

Belongs to the mycobacterial A85 antigen family. Homodimer.

It is found in the secreted. The protein localises to the cell wall. It localises to the cytoplasm. The enzyme catalyses an acyl-CoA + a 1,2-diacyl-sn-glycerol = a triacyl-sn-glycerol + CoA. It carries out the reaction 2 alpha,alpha'-trehalose 6-mycolate = alpha,alpha'-trehalose 6,6'-bismycolate + alpha,alpha-trehalose. Its function is as follows. The antigen 85 proteins (FbpA, FbpB, FbpC) are responsible for the high affinity of mycobacteria for fibronectin, a large adhesive glycoprotein, which facilitates the attachment of M.tuberculosis to murine alveolar macrophages (AMs). They also help to maintain the integrity of the cell wall by catalyzing the transfer of mycolic acids to cell wall arabinogalactan, and through the synthesis of alpha,alpha-trehalose dimycolate (TDM, cord factor). They catalyze the transfer of a mycoloyl residue from one molecule of alpha,alpha-trehalose monomycolate (TMM) to another TMM, leading to the formation of TDM. FbpA mediates triacylglycerol (TAG) formation with long-chain acyl-CoA as the acyl donor and 1,2-dipalmitoyl-sn-glycerol (1,2-dipalmitin) as the acyl acceptor. It has a preference for C26:0-CoA over C18:1-CoA. This chain is Diacylglycerol acyltransferase/mycolyltransferase Ag85A (fbpA), found in Mycobacterium bovis (strain ATCC BAA-935 / AF2122/97).